We begin with the raw amino-acid sequence, 279 residues long: Coiled-coil domain-containing protein 117 (279 aa).

The segment at 1–82 (MAALGRPFSG…REEEEDDDCP (82 aa)) is disordered. Arg48 carries the post-translational modification Omega-N-methylarginine. Ser53 bears the Phosphoserine mark. Residues 63–72 (VSVHCKKKHK) show a composition bias toward basic residues. Positions 141-168 (QCEVARRKLQEIEDRIIDEDEEVEADRN) form a coiled coil. The tract at residues 217 to 279 (LLSDKPKPSS…ATSTEEEMEL (63 aa)) is disordered. 2 stretches are compositionally biased toward polar residues: residues 224-235 (PSSNTKNYTGES) and 262-272 (SLYNSLETATS).

As to quaternary structure, interacts with CIAO2B; the interaction is direct. Interacts with MMS19; the interaction is indirect.

It localises to the cytoplasm. The protein localises to the cytoskeleton. Its subcellular location is the spindle. The protein resides in the nucleus. Its function is as follows. Facilitates DNA repair, cell cycle progression, and cell proliferation through its interaction with CIAO2B. This is Coiled-coil domain-containing protein 117 from Homo sapiens (Human).